Consider the following 111-residue polypeptide: MNAHKERLESNLLELLQEALAGLNDGELNSLSVTKVECSKGKHHALVFVLSSDHKILSKLKKAEGLIRQFVLQASGWFKCPKLSFVLDNSLEKQLRLDAIFNEIAKGKDND.

It belongs to the RbfA family. In terms of assembly, monomer. Binds 30S ribosomal subunits, but not 50S ribosomal subunits or 70S ribosomes.

The protein localises to the cytoplasm. In terms of biological role, one of several proteins that assist in the late maturation steps of the functional core of the 30S ribosomal subunit. Associates with free 30S ribosomal subunits (but not with 30S subunits that are part of 70S ribosomes or polysomes). Required for efficient processing of 16S rRNA. May interact with the 5'-terminal helix region of 16S rRNA. This chain is Ribosome-binding factor A, found in Helicobacter pylori (strain P12).